A 549-amino-acid chain; its full sequence is Lysine-specific demethylase JMJ31 (549 aa).

Residues 125–296 (DYRPGQIYLA…SNMPEHMDSY (172 aa)) enclose the JmjC domain. 3 residues coordinate Fe cation: His184, Asp186, and His266.

This sequence belongs to the JARID1 histone demethylase family. Fe(2+) is required as a cofactor. As to expression, mostly expressed in leaves and inflorescences, and, to a lower extent, in roots, siliques and stems.

The protein localises to the nucleus. In terms of biological role, may function as histone H3 lysine demethylase and be involved in regulation of gene expression. This chain is Lysine-specific demethylase JMJ31, found in Arabidopsis thaliana (Mouse-ear cress).